The primary structure comprises 92 residues: Small ribosomal subunit protein uS19 (92 aa).

Belongs to the universal ribosomal protein uS19 family.

Its function is as follows. Protein S19 forms a complex with S13 that binds strongly to the 16S ribosomal RNA. In Variovorax paradoxus (strain S110), this protein is Small ribosomal subunit protein uS19.